A 210-amino-acid chain; its full sequence is Probable high-affinity nitrate transporter-activating protein 2.2 (210 aa).

A signal peptide spans 1-23 (MARFGAVIHRVFLPLLLLLVVLG). Residues 182-202 (IEVAAGVLSAFSVAALAVFLV) form a helical membrane-spanning segment.

It belongs to the NAR2 family.

The protein localises to the cell membrane. Its function is as follows. Involved in nitrate transport. This Oryza sativa subsp. japonica (Rice) protein is Probable high-affinity nitrate transporter-activating protein 2.2 (NAR2.2).